The primary structure comprises 381 residues: Beta-lactamase CMY-4 (381 aa).

A signal peptide spans 1 to 20; it reads MMKKSLCCALLLTASFSTFA. Serine 84 acts as the Acyl-ester intermediate in catalysis. Serine 84, glutamine 140, tyrosine 170, and asparagine 172 together coordinate a beta-lactam.

The protein belongs to the class-C beta-lactamase family.

The enzyme catalyses a beta-lactam + H2O = a substituted beta-amino acid. Its function is as follows. Class C beta-lactamase which confers resistance to penicillins and cephalosporins. The protein is Beta-lactamase CMY-4 of Klebsiella pneumoniae.